A 457-amino-acid chain; its full sequence is Exodeoxyribonuclease 7 large subunit (457 aa).

The protein belongs to the XseA family. As to quaternary structure, heterooligomer composed of large and small subunits.

The protein resides in the cytoplasm. It carries out the reaction Exonucleolytic cleavage in either 5'- to 3'- or 3'- to 5'-direction to yield nucleoside 5'-phosphates.. Its function is as follows. Bidirectionally degrades single-stranded DNA into large acid-insoluble oligonucleotides, which are then degraded further into small acid-soluble oligonucleotides. This chain is Exodeoxyribonuclease 7 large subunit, found in Cronobacter sakazakii (strain ATCC BAA-894) (Enterobacter sakazakii).